The primary structure comprises 304 residues: Energy-coupling factor transporter ATP-binding protein EcfA2 (304 aa).

The region spanning 3-261 (IIVKNISYIY…EKFLVENKLK (259 aa)) is the ABC transporter domain. 40–47 (GSTGSGKT) is a binding site for ATP.

Belongs to the ABC transporter superfamily. Energy-coupling factor EcfA family. As to quaternary structure, forms a stable energy-coupling factor (ECF) transporter complex composed of 2 membrane-embedded substrate-binding proteins (S component), 2 ATP-binding proteins (A component) and 2 transmembrane proteins (T component).

The protein localises to the cell membrane. Its function is as follows. ATP-binding (A) component of a common energy-coupling factor (ECF) ABC-transporter complex. Unlike classic ABC transporters this ECF transporter provides the energy necessary to transport a number of different substrates. The polypeptide is Energy-coupling factor transporter ATP-binding protein EcfA2 (Mycoplasmopsis pulmonis (strain UAB CTIP) (Mycoplasma pulmonis)).